Here is a 1316-residue protein sequence, read N- to C-terminus: DNA-directed RNA polymerase subunit beta' (1316 aa).

Residues Cys60, Cys62, Cys75, and Cys78 each coordinate Zn(2+). Mg(2+) contacts are provided by Asp535, Asp537, and Asp539. The Zn(2+) site is built by Cys891, Cys968, Cys975, and Cys978.

Belongs to the RNA polymerase beta' chain family. The RNAP catalytic core consists of 2 alpha, 1 beta, 1 beta' and 1 omega subunit. When a sigma factor is associated with the core the holoenzyme is formed, which can initiate transcription. Requires Mg(2+) as cofactor. Zn(2+) is required as a cofactor.

The enzyme catalyses RNA(n) + a ribonucleoside 5'-triphosphate = RNA(n+1) + diphosphate. Functionally, DNA-dependent RNA polymerase catalyzes the transcription of DNA into RNA using the four ribonucleoside triphosphates as substrates. In Mycobacterium marinum (strain ATCC BAA-535 / M), this protein is DNA-directed RNA polymerase subunit beta'.